The following is a 255-amino-acid chain: Proliferating cell nuclear antigen 2 (255 aa).

Residues 61-80 (HCDRNVSLGLDLKSLGKVLK) mediate DNA binding.

This sequence belongs to the PCNA family. Homotrimer. Interacts with the catalytic subunits of two DNA polymerase complexes: PolD1 in the delta complex and PolE1/DNApol-epsilon255 in the epsilon complex.

Its subcellular location is the nucleus. The protein resides in the chromosome. It is found in the cytoplasm. In terms of biological role, likely to be an auxiliary protein of DNA polymerase delta complex and is probably involved in the control of DNA replication and repair by increasing the polymerase's processibility. May function independently of PCNA during DNA repair. The chain is Proliferating cell nuclear antigen 2 from Drosophila melanogaster (Fruit fly).